A 393-amino-acid chain; its full sequence is Succinate--CoA ligase [ADP-forming] subunit beta (393 aa).

An ATP-grasp domain is found at 9-251 (KALFEKFGVL…LNEEDPKEIE (243 aa)). Residues Lys-46, 53–55 (GRG), Ser-109, and Glu-114 each bind ATP. Mg(2+) contacts are provided by Asn-206 and Asp-220. Substrate is bound by residues Asn-271 and 328–330 (GIM).

It belongs to the succinate/malate CoA ligase beta subunit family. Heterotetramer of two alpha and two beta subunits. It depends on Mg(2+) as a cofactor.

It carries out the reaction succinate + ATP + CoA = succinyl-CoA + ADP + phosphate. The catalysed reaction is GTP + succinate + CoA = succinyl-CoA + GDP + phosphate. The protein operates within carbohydrate metabolism; tricarboxylic acid cycle; succinate from succinyl-CoA (ligase route): step 1/1. In terms of biological role, succinyl-CoA synthetase functions in the citric acid cycle (TCA), coupling the hydrolysis of succinyl-CoA to the synthesis of either ATP or GTP and thus represents the only step of substrate-level phosphorylation in the TCA. The beta subunit provides nucleotide specificity of the enzyme and binds the substrate succinate, while the binding sites for coenzyme A and phosphate are found in the alpha subunit. This is Succinate--CoA ligase [ADP-forming] subunit beta from Opitutus terrae (strain DSM 11246 / JCM 15787 / PB90-1).